Reading from the N-terminus, the 180-residue chain is Crossover junction endodeoxyribonuclease RuvC (180 aa).

Residues aspartate 7, glutamate 66, and aspartate 138 contribute to the active site. The Mg(2+) site is built by aspartate 7, glutamate 66, and aspartate 138.

This sequence belongs to the RuvC family. In terms of assembly, homodimer which binds Holliday junction (HJ) DNA. The HJ becomes 2-fold symmetrical on binding to RuvC with unstacked arms; it has a different conformation from HJ DNA in complex with RuvA. In the full resolvosome a probable DNA-RuvA(4)-RuvB(12)-RuvC(2) complex forms which resolves the HJ. Requires Mg(2+) as cofactor.

The protein resides in the cytoplasm. The enzyme catalyses Endonucleolytic cleavage at a junction such as a reciprocal single-stranded crossover between two homologous DNA duplexes (Holliday junction).. The RuvA-RuvB-RuvC complex processes Holliday junction (HJ) DNA during genetic recombination and DNA repair. Endonuclease that resolves HJ intermediates. Cleaves cruciform DNA by making single-stranded nicks across the HJ at symmetrical positions within the homologous arms, yielding a 5'-phosphate and a 3'-hydroxyl group; requires a central core of homology in the junction. The consensus cleavage sequence is 5'-(A/T)TT(C/G)-3'. Cleavage occurs on the 3'-side of the TT dinucleotide at the point of strand exchange. HJ branch migration catalyzed by RuvA-RuvB allows RuvC to scan DNA until it finds its consensus sequence, where it cleaves and resolves the cruciform DNA. This Burkholderia multivorans (strain ATCC 17616 / 249) protein is Crossover junction endodeoxyribonuclease RuvC.